Reading from the N-terminus, the 326-residue chain is 4-hydroxy-3-methylbut-2-enyl diphosphate reductase (326 aa).

C22 provides a ligand contact to [4Fe-4S] cluster. Residues H51 and H84 each contribute to the (2E)-4-hydroxy-3-methylbut-2-enyl diphosphate site. Dimethylallyl diphosphate is bound by residues H51 and H84. H51 and H84 together coordinate isopentenyl diphosphate. Position 106 (C106) interacts with [4Fe-4S] cluster. Residue H134 participates in (2E)-4-hydroxy-3-methylbut-2-enyl diphosphate binding. A dimethylallyl diphosphate-binding site is contributed by H134. Residue H134 coordinates isopentenyl diphosphate. E136 serves as the catalytic Proton donor. T174 serves as a coordination point for (2E)-4-hydroxy-3-methylbut-2-enyl diphosphate. Position 204 (C204) interacts with [4Fe-4S] cluster. (2E)-4-hydroxy-3-methylbut-2-enyl diphosphate is bound by residues S232, S233, N234, and S276. Dimethylallyl diphosphate-binding residues include S232, S233, N234, and S276. Isopentenyl diphosphate-binding residues include S232, S233, N234, and S276.

Belongs to the IspH family. [4Fe-4S] cluster serves as cofactor.

It carries out the reaction isopentenyl diphosphate + 2 oxidized [2Fe-2S]-[ferredoxin] + H2O = (2E)-4-hydroxy-3-methylbut-2-enyl diphosphate + 2 reduced [2Fe-2S]-[ferredoxin] + 2 H(+). It catalyses the reaction dimethylallyl diphosphate + 2 oxidized [2Fe-2S]-[ferredoxin] + H2O = (2E)-4-hydroxy-3-methylbut-2-enyl diphosphate + 2 reduced [2Fe-2S]-[ferredoxin] + 2 H(+). Its pathway is isoprenoid biosynthesis; dimethylallyl diphosphate biosynthesis; dimethylallyl diphosphate from (2E)-4-hydroxy-3-methylbutenyl diphosphate: step 1/1. The protein operates within isoprenoid biosynthesis; isopentenyl diphosphate biosynthesis via DXP pathway; isopentenyl diphosphate from 1-deoxy-D-xylulose 5-phosphate: step 6/6. Its function is as follows. Catalyzes the conversion of 1-hydroxy-2-methyl-2-(E)-butenyl 4-diphosphate (HMBPP) into a mixture of isopentenyl diphosphate (IPP) and dimethylallyl diphosphate (DMAPP). Acts in the terminal step of the DOXP/MEP pathway for isoprenoid precursor biosynthesis. The chain is 4-hydroxy-3-methylbut-2-enyl diphosphate reductase from Bordetella bronchiseptica (strain ATCC BAA-588 / NCTC 13252 / RB50) (Alcaligenes bronchisepticus).